The chain runs to 926 residues: Serine/threonine-protein kinase pakE (926 aa).

Polar residues predominate over residues 36 to 55 (SSRELPTQDSSTKTSNITTP). Disordered stretches follow at residues 36-257 (SSRE…RPKL) and 546-576 (QLNNNNNNNNNNNNNNNNNNNNNNNNITTTT). Over residues 56–107 (NNNNNNNNNNNNNNNNNNNNNNNNNNNNNNNNNNNNNNNNNNNNNNNNNNNN) the composition is skewed to low complexity. The span at 108–117 (TPTSLNSSWK) shows a compositional bias: polar residues. A compositionally biased stretch (low complexity) spans 134-173 (NNNNNVGSPNNQSTSQTNHQQPPPQQLQQQQSLSSTSTPS). The span at 183-204 (RRNVTSPNLTRSDPTVPITNSR) shows a compositional bias: polar residues. Positions 215–253 (PQFQLNNLNFDDNNDHSTTTTNNNNNNNNNNSNNNNNNN) are enriched in low complexity. Residues 534–567 (LDFEKELKENQQQLNNNNNNNNNNNNNNNNNNNN) are a coiled coil. Positions 650 to 903 (FEFKEKLGQG…VIDLLSHDFI (254 aa)) constitute a Protein kinase domain. ATP contacts are provided by residues 656–664 (LGQGGYGAV) and Lys679. Residue Asp771 is the Proton acceptor of the active site.

Belongs to the protein kinase superfamily. STE Ser/Thr protein kinase family. STE20 subfamily. The cofactor is Mg(2+).

It carries out the reaction L-seryl-[protein] + ATP = O-phospho-L-seryl-[protein] + ADP + H(+). The enzyme catalyses L-threonyl-[protein] + ATP = O-phospho-L-threonyl-[protein] + ADP + H(+). May play a role in responding to changes in chemoattractant levels. This Dictyostelium discoideum (Social amoeba) protein is Serine/threonine-protein kinase pakE.